The primary structure comprises 298 residues: HTH-type transcriptional regulator ArgP (298 aa).

In terms of domain architecture, HTH lysR-type spans 4-60; sequence LDYKWIEALDAVVAQGGFERAAEELYISQSAVSQRIKQLERFLAQSVLIREQPPKPT. The H-T-H motif DNA-binding region spans 21–40; that stretch reads FERAAEELYISQSAVSQRIK.

This sequence belongs to the LysR transcriptional regulatory family. In terms of assembly, homodimer.

Functionally, controls the transcription of genes involved in arginine and lysine metabolism. The polypeptide is HTH-type transcriptional regulator ArgP (Vibrio vulnificus (strain YJ016)).